Here is a 686-residue protein sequence, read N- to C-terminus: XK-related protein 5 (686 aa).

The next 5 membrane-spanning stretches (helical) occupy residues 33–53 (LLWG…QALS), 205–225 (HFWV…WLVA), 239–259 (LFNL…WDSP), 265–285 (VTFY…ATDF), and 297–317 (IAGV…YYSL). Disordered regions lie at residues 340-362 (DKTE…ESSG), 444-470 (LQRK…NSSA), and 490-589 (FASD…VGLA). Composition is skewed to polar residues over residues 455–470 (LPSS…NSSA) and 490–509 (FASD…TQGE). The segment covering 523–536 (QGKGTGGQQRGGEG) has biased composition (gly residues). The segment covering 550–567 (VATSSQQEGSPATLQTAH) has biased composition (polar residues).

It belongs to the XK family.

It is found in the cell membrane. This is XK-related protein 5 from Pan troglodytes (Chimpanzee).